We begin with the raw amino-acid sequence, 260 residues long: Putative methylesterase 19 (260 aa).

Residue Ser-81 is the Acyl-ester intermediate of the active site. Catalysis depends on charge relay system residues Asp-210 and His-238.

It belongs to the AB hydrolase superfamily. Methylesterase family.

Functionally, putative methylesterase. This chain is Putative methylesterase 19, found in Arabidopsis thaliana (Mouse-ear cress).